We begin with the raw amino-acid sequence, 248 residues long: UPF0273 protein APE_1505.1 (248 aa).

The KaiC domain maps to aspartate 3 to isoleucine 247. Residue glycine 30–serine 37 participates in ATP binding.

The protein belongs to the UPF0273 family.

The polypeptide is UPF0273 protein APE_1505.1 (Aeropyrum pernix (strain ATCC 700893 / DSM 11879 / JCM 9820 / NBRC 100138 / K1)).